Here is a 687-residue protein sequence, read N- to C-terminus: uncharacterized protein (687 aa).

14 consecutive transmembrane segments (helical) span residues I28 to V48, W66 to G86, V94 to T114, G126 to L146, G154 to L174, W182 to V202, P211 to A231, S243 to L263, V287 to L307, L320 to V340, I348 to D368, L378 to V398, V414 to V434, and L480 to L500.

The protein belongs to the major facilitator superfamily. TCR/Tet family.

It localises to the cell membrane. This is an uncharacterized protein from Mycobacterium tuberculosis (strain CDC 1551 / Oshkosh).